Consider the following 91-residue polypeptide: ATP synthase subunit c (91 aa).

2 helical membrane passes run 4-24 and 53-73; these read FTMC…GTGI and IGLA…LIIL.

It belongs to the ATPase C chain family. F-type ATPases have 2 components, F(1) - the catalytic core - and F(0) - the membrane proton channel. F(1) has five subunits: alpha(3), beta(3), gamma(1), delta(1), epsilon(1). F(0) has three main subunits: a(1), b(2) and c(10-14). The alpha and beta chains form an alternating ring which encloses part of the gamma chain. F(1) is attached to F(0) by a central stalk formed by the gamma and epsilon chains, while a peripheral stalk is formed by the delta and b chains.

Its subcellular location is the cell inner membrane. Its function is as follows. F(1)F(0) ATP synthase produces ATP from ADP in the presence of a proton or sodium gradient. F-type ATPases consist of two structural domains, F(1) containing the extramembraneous catalytic core and F(0) containing the membrane proton channel, linked together by a central stalk and a peripheral stalk. During catalysis, ATP synthesis in the catalytic domain of F(1) is coupled via a rotary mechanism of the central stalk subunits to proton translocation. In terms of biological role, key component of the F(0) channel; it plays a direct role in translocation across the membrane. A homomeric c-ring of between 10-14 subunits forms the central stalk rotor element with the F(1) delta and epsilon subunits. The protein is ATP synthase subunit c of Trichlorobacter lovleyi (strain ATCC BAA-1151 / DSM 17278 / SZ) (Geobacter lovleyi).